The sequence spans 280 residues: Dual adapter for phosphotyrosine and 3-phosphotyrosine and 3-phosphoinositide (280 aa).

Residues 35–129 enclose the SH2 domain; that stretch reads WYHGNLTRHA…GTLMVLKHPY (95 aa). Tyr-139 carries the post-translational modification Phosphotyrosine. Ser-141 is modified (phosphoserine). Positions 164 to 259 constitute a PH domain; it reads LGTKEGYLTK…WIKILRWKLS (96 aa).

As to quaternary structure, interacts with PtdIns(3,4,5)P3 and PLCG2. In terms of processing, phosphorylated on tyrosine residues.

It is found in the cytoplasm. Its subcellular location is the membrane. Its function is as follows. May act as a B-cell-associated adapter that regulates B-cell antigen receptor (BCR)-signaling downstream of PI3K. The sequence is that of Dual adapter for phosphotyrosine and 3-phosphotyrosine and 3-phosphoinositide (Dapp1) from Mus musculus (Mouse).